The primary structure comprises 200 residues: Transcription elongation factor A protein-like 3 (200 aa).

Over residues 1-19 (MEEVRGENEGKLEKEGKPE) the composition is skewed to basic and acidic residues. A disordered region spans residues 1–200 (MEEVRGENEG…QRGLHDIPYL (200 aa)). Residues 20–34 (DEVEPEDEEKSDEDE) are compositionally biased toward acidic residues. The residue at position 30 (Ser-30) is a Phosphoserine. Basic and acidic residues-rich tracts occupy residues 47 to 85 (GKPEEEAKPDEQGQDEGKPEKQGKSDGEGKRQGESKPDS), 94 to 106 (RAAEKRPAEDYVP), and 114 to 153 (DRGTDDSPKNSQEDLQDRHVSSEEMMRECADMTRAQEELR).

The protein belongs to the TFS-II family. TFA subfamily.

The protein resides in the nucleus. May be involved in transcriptional regulation. The protein is Transcription elongation factor A protein-like 3 (Tceal3) of Mus musculus (Mouse).